Consider the following 618-residue polypeptide: Manganese lipoxygenase (618 aa).

The N-terminal stretch at 1–16 is a signal peptide; the sequence is MRSRILAIVFAARHVA. Residues 36 to 45 show a composition bias toward low complexity; it reads SSTTVLPSPT. The segment at 36–58 is disordered; that stretch reads SSTTVLPSPTQYTLPNNDPNQGA. The span at 46–58 shows a compositional bias: polar residues; it reads QYTLPNNDPNQGA. The region spanning 47-617 is the Lipoxygenase domain; that stretch reads YTLPNNDPNQ…NPAVNPFFLS (571 aa). N-linked (GlcNAc...) asparagine glycans are attached at residues Asn-60, Asn-91, Asn-106, Asn-116, and Asn-157. Residues His-290, His-294, His-478, and Asn-482 each contribute to the Mn(2+) site. Asn-513 carries an N-linked (GlcNAc...) asparagine glycan. Position 618 (Val-618) interacts with Mn(2+).

Belongs to the lipoxygenase family. Requires Mn(2+) as cofactor. In terms of processing, N- and O-glycosylated.

It is found in the secreted. It catalyses the reaction (9Z,12Z)-octadecadienoate + O2 = (11S)-hydroperoxy-(9Z,12Z)-octadecadienoate. It carries out the reaction (9Z,12Z)-octadecadienoate + O2 = (13R)-hydroperoxy-(9Z,11E)-octadecadienoate. The enzyme catalyses (9Z,12Z,15Z)-octadecatrienoate + O2 = (11S)-hydroperoxy-(9Z,12Z,15Z)-octadecatrienoate. The catalysed reaction is (9Z,12Z,15Z)-octadecatrienoate + O2 = (13R)-hydroperoxy-(9Z,11E,15Z)-octadecatrienoate. In terms of biological role, lipoxygenase that metabolizes linoleic and alpha-linolenic acids to 11S- and 13R-hydroperoxy fatty acids. At the end of lipoxygenation, the intermediate product 11S-HPODE from linoleic acid is then transformed into 13R-HPODE as the final product. It also acts on alpha-linolenic acid producing 11S-HPOTrE and 13R-HPOTrE with subsequent transformation of 11S-HPOTrE to 13R-HPOTrE as the final product. Gamma-linolenic acid is a poor substrate. Oleate and arachidonate are not substrates. This is Manganese lipoxygenase from Gaeumannomyces tritici (Wheat and barley take-all root rot fungus).